A 404-amino-acid polypeptide reads, in one-letter code: Multidrug resistance protein MdtG (404 aa).

11 helical membrane-spanning segments follow: residues 19-39 (LGCF…PLYV), 56-76 (LVFS…GGLA), 90-110 (LGMA…QFLI), 113-133 (ALLG…ATQV), 144-164 (TLST…GLLA), 171-191 (PVFF…FFFI), 222-242 (LFVT…ILTL), 254-274 (IAFI…LSAP), 288-308 (ILIV…FVQT), 317-337 (FLLG…LVYN), and 376-396 (AVFC…WNSL).

It belongs to the major facilitator superfamily. DHA1 family. MdtG (TC 2.A.1.2.20) subfamily.

The protein resides in the cell inner membrane. This Salmonella typhimurium (strain LT2 / SGSC1412 / ATCC 700720) protein is Multidrug resistance protein MdtG.